Reading from the N-terminus, the 364-residue chain is DNA polymerase IV (364 aa).

One can recognise a UmuC domain in the interval 14-198 (IIHIDMDAFF…LPIEKFHGVG (185 aa)). 2 residues coordinate Mg(2+): Asp-18 and Asp-116. Glu-117 is a catalytic residue.

It belongs to the DNA polymerase type-Y family. As to quaternary structure, monomer. Mg(2+) serves as cofactor.

The protein localises to the cytoplasm. It catalyses the reaction DNA(n) + a 2'-deoxyribonucleoside 5'-triphosphate = DNA(n+1) + diphosphate. Functionally, poorly processive, error-prone DNA polymerase involved in untargeted mutagenesis. Copies undamaged DNA at stalled replication forks, which arise in vivo from mismatched or misaligned primer ends. These misaligned primers can be extended by PolIV. Exhibits no 3'-5' exonuclease (proofreading) activity. May be involved in translesional synthesis, in conjunction with the beta clamp from PolIII. This Streptococcus pyogenes serotype M5 (strain Manfredo) protein is DNA polymerase IV.